A 274-amino-acid chain; its full sequence is Formamidopyrimidine-DNA glycosylase (274 aa).

P2 functions as the Schiff-base intermediate with DNA in the catalytic mechanism. E3 (proton donor) is an active-site residue. Catalysis depends on K58, which acts as the Proton donor; for beta-elimination activity. DNA contacts are provided by H91 and R110. The FPG-type zinc-finger motif lies at 238–272; it reads QVYDKTGQECVRCGTIIEKIQLGGRGTHFCPNCQR. The active-site Proton donor; for delta-elimination activity is R262.

Belongs to the FPG family. As to quaternary structure, monomer. The cofactor is Zn(2+).

It carries out the reaction Hydrolysis of DNA containing ring-opened 7-methylguanine residues, releasing 2,6-diamino-4-hydroxy-5-(N-methyl)formamidopyrimidine.. It catalyses the reaction 2'-deoxyribonucleotide-(2'-deoxyribose 5'-phosphate)-2'-deoxyribonucleotide-DNA = a 3'-end 2'-deoxyribonucleotide-(2,3-dehydro-2,3-deoxyribose 5'-phosphate)-DNA + a 5'-end 5'-phospho-2'-deoxyribonucleoside-DNA + H(+). Its function is as follows. Involved in base excision repair of DNA damaged by oxidation or by mutagenic agents. Acts as a DNA glycosylase that recognizes and removes damaged bases. Has a preference for oxidized purines, such as 7,8-dihydro-8-oxoguanine (8-oxoG). Has AP (apurinic/apyrimidinic) lyase activity and introduces nicks in the DNA strand. Cleaves the DNA backbone by beta-delta elimination to generate a single-strand break at the site of the removed base with both 3'- and 5'-phosphates. The chain is Formamidopyrimidine-DNA glycosylase from Streptococcus pneumoniae (strain ATCC BAA-255 / R6).